We begin with the raw amino-acid sequence, 649 residues long: Acetyl-coenzyme A synthetase (649 aa).

CoA-binding positions include 190–193 and T310; that span reads RGGR. ATP contacts are provided by residues 386–388, 410–415, D499, and R514; these read GEP and DTWWQT. S522 is a binding site for CoA. Residue R525 participates in ATP binding. V536, H538, and V541 together coordinate Mg(2+). Residue R583 participates in CoA binding. Position 608 is an N6-acetyllysine (K608).

Belongs to the ATP-dependent AMP-binding enzyme family. The cofactor is Mg(2+). Acetylated. Deacetylation by the SIR2-homolog deacetylase activates the enzyme.

The enzyme catalyses acetate + ATP + CoA = acetyl-CoA + AMP + diphosphate. Functionally, catalyzes the conversion of acetate into acetyl-CoA (AcCoA), an essential intermediate at the junction of anabolic and catabolic pathways. AcsA undergoes a two-step reaction. In the first half reaction, AcsA combines acetate with ATP to form acetyl-adenylate (AcAMP) intermediate. In the second half reaction, it can then transfer the acetyl group from AcAMP to the sulfhydryl group of CoA, forming the product AcCoA. The chain is Acetyl-coenzyme A synthetase from Methylorubrum populi (strain ATCC BAA-705 / NCIMB 13946 / BJ001) (Methylobacterium populi).